The primary structure comprises 115 residues: uncharacterized protein (115 aa).

Residues 1–115 are disordered; sequence MGETWFLTPN…ARSPERTPSP (115 aa). A compositionally biased stretch (polar residues) spans 7-17; it reads LTPNGQSSPGS. Composition is skewed to low complexity over residues 60–70 and 91–107; these read ASCAPRATPRR and SASAPAGPASSAPWPAR.

This is an uncharacterized protein from Human adenovirus C serotype 2 (HAdV-2).